Consider the following 261-residue polypeptide: 6-carboxyhexanoate--CoA ligase (261 aa).

Belongs to the BioW family. Homodimer. Mg(2+) is required as a cofactor.

The enzyme catalyses heptanedioate + ATP + CoA = 6-carboxyhexanoyl-CoA + AMP + diphosphate. It functions in the pathway metabolic intermediate metabolism; pimeloyl-CoA biosynthesis; pimeloyl-CoA from pimelate: step 1/1. Catalyzes the transformation of pimelate into pimeloyl-CoA with concomitant hydrolysis of ATP to AMP. The polypeptide is 6-carboxyhexanoate--CoA ligase (Bacillus licheniformis (strain ATCC 14580 / DSM 13 / JCM 2505 / CCUG 7422 / NBRC 12200 / NCIMB 9375 / NCTC 10341 / NRRL NRS-1264 / Gibson 46)).